Here is a 1003-residue protein sequence, read N- to C-terminus: Calcium-transporting ATPase sarcoplasmic/endoplasmic reticulum type (1003 aa).

Topologically, residues 1-59 (MEDAHAKKWEEVVDYFGVDPERGLALEQVKKNQEKYGPNELPAEEGKSLLTLILEQFDD) are cytoplasmic. A helical transmembrane segment spans residues 60–78 (LLVKILLLAAIISLVLALF). Residues 79–89 (EEHDDEAEQLT) are Extracellular-facing. Residues 90–110 (AYVEPFVILLILIANAVVGVW) traverse the membrane as a helical segment. The Cytoplasmic portion of the chain corresponds to 111-262 (QEKNAESAIE…QQKLDEFGEQ (152 aa)). Residues 263-282 (LSKVISVICVAVWAINIGHF) form a helical membrane-spanning segment. Topologically, residues 283–300 (NDPAHGGSWIKGAIYYFK) are extracellular. Residues 301 to 318 (IAVALAVAAIPEGLPAVI) form a helical membrane-spanning segment. Residues 319–775 (TTCLALGTRR…RYLISSNIGE (457 aa)) are Cytoplasmic-facing. The active-site 4-aspartylphosphate intermediate is the aspartate 354. An ATP-binding site is contributed by lysine 519. A helical membrane pass occupies residues 776 to 799 (VVSIFLTAALGLPEALIPVQLLWV). Residues 800-840 (NLVTDGLPATALGFNPPDLDIMNKPPRRADEGLITGWLFFR) are Extracellular-facing. The chain crosses the membrane as a helical span at residues 841 to 863 (YMAIGTYVGAATVGAAAHWFMMS). The Cytoplasmic segment spans residues 864–898 (PTGPGLNFYQLSHHLQCTPENEYFEGIDCEIFSDP). The helical transmembrane segment at 899 to 917 (HPMTMALSVLVTIEMLNAI) threads the bilayer. Residues 918 to 934 (NSLSENQSLLVMPPWSN) are Extracellular-facing. The chain crosses the membrane as a helical span at residues 935 to 954 (IWLISAICLSMTLHFVILYV). Topologically, residues 955–1003 (EILSTVFQICPLTLTEWIVVLKISFPVLLLDEVLKFVARKYTDEFSFIK) are cytoplasmic.

The protein belongs to the cation transport ATPase (P-type) (TC 3.A.3) family.

The protein localises to the sarcoplasmic reticulum membrane. It carries out the reaction Ca(2+)(in) + ATP + H2O = Ca(2+)(out) + ADP + phosphate + H(+). Its function is as follows. This magnesium-dependent enzyme catalyzes the hydrolysis of ATP coupled with the transport of the calcium. This is Calcium-transporting ATPase sarcoplasmic/endoplasmic reticulum type from Artemia franciscana (Brine shrimp).